The following is a 115-amino-acid chain: Ribonuclease P protein component (115 aa).

The protein belongs to the RnpA family. Consists of a catalytic RNA component (M1 or rnpB) and a protein subunit.

The catalysed reaction is Endonucleolytic cleavage of RNA, removing 5'-extranucleotides from tRNA precursor.. RNaseP catalyzes the removal of the 5'-leader sequence from pre-tRNA to produce the mature 5'-terminus. It can also cleave other RNA substrates such as 4.5S RNA. The protein component plays an auxiliary but essential role in vivo by binding to the 5'-leader sequence and broadening the substrate specificity of the ribozyme. The chain is Ribonuclease P protein component from Staphylococcus aureus (strain Mu3 / ATCC 700698).